An 836-amino-acid polypeptide reads, in one-letter code: Sucrose synthase 5 (836 aa).

Residues 270–748 form a GT-B glycosyltransferase region; sequence RIFNVVIFSV…GLQRINECYT (479 aa). The segment at 805–836 is disordered; that stretch reads PPPLPPKPLVKPSASKGSKRTQPRLSFRLFGA.

This sequence belongs to the glycosyltransferase 1 family. Plant sucrose synthase subfamily. As to expression, detected in the whole plant but more precisely confined to the vasculature in cotyledons, leaves, petals, anthers and roots. Also detected in developing siliques, young immature rosette and cauline leaves.

It is found in the secreted. It localises to the cell wall. The catalysed reaction is an NDP-alpha-D-glucose + D-fructose = a ribonucleoside 5'-diphosphate + sucrose + H(+). Functionally, sucrose-cleaving enzyme that provides UDP-glucose and fructose for various metabolic pathways. Functions in callose synthesis at the site of phloem sieve elements. This chain is Sucrose synthase 5 (SUS5), found in Arabidopsis thaliana (Mouse-ear cress).